The chain runs to 190 residues: Crossover junction endodeoxyribonuclease RuvC (190 aa).

Residues D8, E67, and D139 contribute to the active site. Residues D8, E67, and D139 each coordinate Mg(2+).

Belongs to the RuvC family. Homodimer which binds Holliday junction (HJ) DNA. The HJ becomes 2-fold symmetrical on binding to RuvC with unstacked arms; it has a different conformation from HJ DNA in complex with RuvA. In the full resolvosome a probable DNA-RuvA(4)-RuvB(12)-RuvC(2) complex forms which resolves the HJ. It depends on Mg(2+) as a cofactor.

It localises to the cytoplasm. It carries out the reaction Endonucleolytic cleavage at a junction such as a reciprocal single-stranded crossover between two homologous DNA duplexes (Holliday junction).. The RuvA-RuvB-RuvC complex processes Holliday junction (HJ) DNA during genetic recombination and DNA repair. Endonuclease that resolves HJ intermediates. Cleaves cruciform DNA by making single-stranded nicks across the HJ at symmetrical positions within the homologous arms, yielding a 5'-phosphate and a 3'-hydroxyl group; requires a central core of homology in the junction. The consensus cleavage sequence is 5'-(A/T)TT(C/G)-3'. Cleavage occurs on the 3'-side of the TT dinucleotide at the point of strand exchange. HJ branch migration catalyzed by RuvA-RuvB allows RuvC to scan DNA until it finds its consensus sequence, where it cleaves and resolves the cruciform DNA. The polypeptide is Crossover junction endodeoxyribonuclease RuvC (Actinobacillus succinogenes (strain ATCC 55618 / DSM 22257 / CCUG 43843 / 130Z)).